The primary structure comprises 399 residues: MNIHEYQAKQVLAKYGVPVLKGGVAYTAEEAEKVALDLAGPVYVVKSQIHAGGRGKGHFKEPSAGDKGGVRVVKSTDEVFSNAKQMLGATLVTHQSGAEGKEVKRVYIEDGCDIKRELYLSLLVDRATSAVTVMASTEGGMDIEEVANHSPEKIFFQAIDQATGISGFHCRNVAFSLGLEGKQVGAFTKLLSALYKCFTETDCSMLEINPLVVTGDGQVIPLDCKMNFDSNALYRHPDIVEYRDEDEEDPMELEASKHDLNYIKLDGSIGCMVNGAGLAMATMDIIKLKGGAPANFLDVGGGATRERVTAAFKIILSDPNVDGILVNIFGGIMRCDVIAEGVIAAAREVSLNVPLVVRLEGTNVELGKKIMVESGLPIISADNLADAAEKVVKAVKEAS.

The 246-residue stretch at 9–254 (KQVLAKYGVP…EDEEDPMELE (246 aa)) folds into the ATP-grasp domain. Residues Lys-46, 53–55 (GRG), Glu-109, Cys-112, and Glu-117 each bind ATP. The Mg(2+) site is built by Asn-209 and Asp-223. Residues Asn-274 and 331 to 333 (GIM) contribute to the substrate site.

This sequence belongs to the succinate/malate CoA ligase beta subunit family. In terms of assembly, heterotetramer of two alpha and two beta subunits. Mg(2+) is required as a cofactor.

It carries out the reaction succinate + ATP + CoA = succinyl-CoA + ADP + phosphate. It catalyses the reaction GTP + succinate + CoA = succinyl-CoA + GDP + phosphate. Its pathway is carbohydrate metabolism; tricarboxylic acid cycle; succinate from succinyl-CoA (ligase route): step 1/1. In terms of biological role, succinyl-CoA synthetase functions in the citric acid cycle (TCA), coupling the hydrolysis of succinyl-CoA to the synthesis of either ATP or GTP and thus represents the only step of substrate-level phosphorylation in the TCA. The beta subunit provides nucleotide specificity of the enzyme and binds the substrate succinate, while the binding sites for coenzyme A and phosphate are found in the alpha subunit. This Rhodospirillum rubrum (strain ATCC 11170 / ATH 1.1.1 / DSM 467 / LMG 4362 / NCIMB 8255 / S1) protein is Succinate--CoA ligase [ADP-forming] subunit beta.